The following is a 193-amino-acid chain: Bcl-2-like protein 2 (193 aa).

Ala2 bears the N-acetylalanine mark. Residues 9–29 carry the BH4 motif; sequence DTRALVADFVGYKLRQKGYVC. The BH1 signature appears at 85-104; sequence ELFQGGPNWGRLVAFFVFGA. The short motif at 136–151 is the BH2 element; sequence DWIHSSGGWAEFTALY.

It belongs to the Bcl-2 family. As to quaternary structure, interacts with HIF3A (via C-terminus domain). Interacts with BOP.

It is found in the mitochondrion membrane. In terms of biological role, promotes cell survival. Blocks dexamethasone-induced apoptosis. Mediates survival of postmitotic Sertoli cells by suppressing death-promoting activity of BAX. This chain is Bcl-2-like protein 2 (BCL2L2), found in Bos taurus (Bovine).